The sequence spans 213 residues: MEVLRRSSVFAAEIMDAFDRSPTDKELVAQAKALGREYVHARLLRAGLSWSAPERASPAPGGRLAEVCTVLLRLGDELEQIRPSVYRNVARQLHIPLQSEPVVTDAFLAVAGHIFSAGITWGKVVSLYSVAAGLAVDCVRQAQPAMVHALVDCLGEFVRKTLATWLRRRGGWTDVLKCVVSTDPGFRSHWLVATLCSFGRFLKAAFFLLLPER.

At Ser7 the chain carries Phosphoserine. The segment at 15 to 45 (MDAFDRSPTDKELVAQAKALGREYVHARLLR) is interactions with ITPR1. Residues Lys25 and Lys32 each participate in a glycyl lysine isopeptide (Lys-Gly) (interchain with G-Cter in ubiquitin) cross-link. The BH4 signature appears at 32 to 44 (KALGREYVHARLL). Residues 67 to 83 (VCTVLLRLGDELEQIRP) carry the BH3 motif. The nuclear export signal stretch occupies residues 71-79 (LLRLGDELE). A BH1 motif is present at residues 113 to 132 (HIFSAGITWGKVVSLYSVAA). Residues Lys160 and Lys177 each participate in a glycyl lysine isopeptide (Lys-Gly) (interchain with G-Cter in ubiquitin) cross-link. Positions 165–179 (WLRRRGGWTDVLKCV) match the BH2 motif. The helical transmembrane segment at 190–210 (WLVATLCSFGRFLKAAFFLLL) threads the bilayer.

This sequence belongs to the Bcl-2 family. As to quaternary structure, monomer; positively regulates apoptotic process. Homodimer. Heterodimer. Oligomer; promoted by apoptotic stimuli and BH3-only proteins; mediates constitutive activation. Interacts (via BH4 domain) with ITPR1; enhances BOK expression and stabilization; limits apoptosis and prevents ubiquitination and then degradation; protects ITPR1 from proteolysis by CASP3 during apoptosis. Interacts with ITPR2 and ITPR3; binds most strongly to ITPR2, and barely to ITPR3; regulates their expression. Interacts with XPO1; translocates to the cytoplasm. Interacts with BNIP3; promotes oligomerization. In terms of processing, ubiquitinated by AMFR/gp78 E3 ubiquitin ligase complex; mediates degradation by ubiquitin-proteasome pathway in a VCP/p97-dependent manner; prevents from proapoptotic activity; promotes degradation of newly synthesized proteins that are not ITPR1 associated. As to expression, widely expressed. Highly expressed in brain, kidney, and spleen.

Its subcellular location is the mitochondrion membrane. It localises to the endoplasmic reticulum membrane. The protein resides in the mitochondrion inner membrane. The protein localises to the cytoplasm. It is found in the nucleus. Its subcellular location is the mitochondrion. It localises to the endoplasmic reticulum. The protein resides in the mitochondrion outer membrane. The protein localises to the early endosome membrane. It is found in the recycling endosome membrane. Its subcellular location is the nucleus outer membrane. It localises to the golgi apparatus. The protein resides in the cis-Golgi network membrane. The protein localises to the trans-Golgi network membrane. It is found in the membrane. In terms of biological role, apoptosis regulator that functions through different apoptotic signaling pathways. Plays a roles as pro-apoptotic protein that positively regulates intrinsic apoptotic process in a BAX- and BAK1-dependent manner or in a BAX- and BAK1-independent manner. In response to endoplasmic reticulum stress promotes mitochondrial apoptosis through downstream BAX/BAK1 activation and positive regulation of PERK-mediated unfolded protein response. Activates apoptosis independently of heterodimerization with survival-promoting BCL2 and BCL2L1 through induction of mitochondrial outer membrane permeabilization, in a BAX- and BAK1-independent manner, in response to inhibition of ERAD-proteasome degradation system, resulting in cytochrome c release. In response to DNA damage, mediates intrinsic apoptotic process in a TP53-dependent manner. Plays a role in granulosa cell apoptosis by CASP3 activation. Plays a roles as anti-apoptotic protein during neuronal apoptotic process, by negatively regulating poly ADP-ribose polymerase-dependent cell death through regulation of neuronal calcium homeostasis and mitochondrial bioenergetics in response to NMDA excitation. In addition to its role in apoptosis, may regulate trophoblast cell proliferation during the early stages of placental development, by acting on G1/S transition through regulation of CCNE1 expression. May also play a role as an inducer of autophagy by disrupting interaction between MCL1 and BECN1. The polypeptide is Bcl-2-related ovarian killer protein (Mus musculus (Mouse)).